Consider the following 260-residue polypeptide: Hydroxyethylthiazole kinase 2 (260 aa).

Residue Met40 coordinates substrate. 2 residues coordinate ATP: Arg116 and Thr161. Position 188 (Ala188) interacts with substrate.

This sequence belongs to the Thz kinase family. The cofactor is Mg(2+).

It carries out the reaction 5-(2-hydroxyethyl)-4-methylthiazole + ATP = 4-methyl-5-(2-phosphooxyethyl)-thiazole + ADP + H(+). Its pathway is cofactor biosynthesis; thiamine diphosphate biosynthesis; 4-methyl-5-(2-phosphoethyl)-thiazole from 5-(2-hydroxyethyl)-4-methylthiazole: step 1/1. Catalyzes the phosphorylation of the hydroxyl group of 4-methyl-5-beta-hydroxyethylthiazole (THZ). This Oceanobacillus iheyensis (strain DSM 14371 / CIP 107618 / JCM 11309 / KCTC 3954 / HTE831) protein is Hydroxyethylthiazole kinase 2.